A 120-amino-acid chain; its full sequence is Cell cycle protein GpsB (120 aa).

Residues 34–74 (LDDVIKDYDTYNKELERLNDENERLRAKVDELNRQVEVGSS) adopt a coiled-coil conformation. A disordered region spans residues 69–90 (VEVGSSMSNQTASRQPVSSATN). Over residues 71 to 90 (VGSSMSNQTASRQPVSSATN) the composition is skewed to polar residues.

It belongs to the GpsB family. As to quaternary structure, forms polymers through the coiled coil domains. Interacts with PBP1, MreC and EzrA.

Its subcellular location is the cytoplasm. Divisome component that associates with the complex late in its assembly, after the Z-ring is formed, and is dependent on DivIC and PBP2B for its recruitment to the divisome. Together with EzrA, is a key component of the system that regulates PBP1 localization during cell cycle progression. Its main role could be the removal of PBP1 from the cell pole after pole maturation is completed. Also contributes to the recruitment of PBP1 to the division complex. Not essential for septum formation. The protein is Cell cycle protein GpsB of Limosilactobacillus reuteri (strain DSM 20016) (Lactobacillus reuteri).